We begin with the raw amino-acid sequence, 64 residues long: DNA gyrase inhibitor YacG (64 aa).

Cys9, Cys12, Cys28, and Cys32 together coordinate Zn(2+). Residues 42 to 64 are disordered; that stretch reads DEENAIPGAPDMSDSDGWSEEQY. Positions 54–64 are enriched in acidic residues; that stretch reads SDSDGWSEEQY.

Belongs to the DNA gyrase inhibitor YacG family. Interacts with GyrB. It depends on Zn(2+) as a cofactor.

Functionally, inhibits all the catalytic activities of DNA gyrase by preventing its interaction with DNA. Acts by binding directly to the C-terminal domain of GyrB, which probably disrupts DNA binding by the gyrase. The sequence is that of DNA gyrase inhibitor YacG from Vibrio vulnificus (strain CMCP6).